The primary structure comprises 505 residues: ATP synthase subunit alpha (505 aa).

Residue Gly-171–Thr-178 coordinates ATP.

Belongs to the ATPase alpha/beta chains family. As to quaternary structure, F-type ATPases have 2 components, CF(1) - the catalytic core - and CF(0) - the membrane proton channel. CF(1) has five subunits: alpha(3), beta(3), gamma(1), delta(1), epsilon(1). CF(0) has three main subunits: a(1), b(2) and c(9-12). The alpha and beta chains form an alternating ring which encloses part of the gamma chain. CF(1) is attached to CF(0) by a central stalk formed by the gamma and epsilon chains, while a peripheral stalk is formed by the delta and b chains.

It localises to the cell inner membrane. It catalyses the reaction ATP + H2O + 4 H(+)(in) = ADP + phosphate + 5 H(+)(out). Its function is as follows. Produces ATP from ADP in the presence of a proton gradient across the membrane. The alpha chain is a regulatory subunit. The protein is ATP synthase subunit alpha of Campylobacter fetus subsp. fetus (strain 82-40).